The chain runs to 267 residues: V-type proton ATPase subunit D (267 aa).

It belongs to the V-ATPase D subunit family. In terms of assembly, V-ATPase is a heteromultimeric enzyme composed of a peripheral catalytic V1 complex (components A to H) attached to an integral membrane V0 proton pore complex (components: a, c, c', c'', d, e, f and VOA1).

Its subcellular location is the vacuole membrane. Subunit of the V1 complex of vacuolar(H+)-ATPase (V-ATPase), a multisubunit enzyme composed of a peripheral complex (V1) that hydrolyzes ATP and a membrane integral complex (V0) that translocates protons. V-ATPase is responsible for acidifying and maintaining the pH of intracellular compartments. This is V-type proton ATPase subunit D (VMA8) from Candida albicans (strain SC5314 / ATCC MYA-2876) (Yeast).